The chain runs to 60 residues: UPF0434 protein Ent638_1436 (60 aa).

Belongs to the UPF0434 family.

In Enterobacter sp. (strain 638), this protein is UPF0434 protein Ent638_1436.